Consider the following 371-residue polypeptide: DNA primase large subunit PriL (371 aa).

[4Fe-4S] cluster contacts are provided by Cys230, Cys301, Cys310, and Cys317. A disordered region spans residues 337–371; it reads EREKEEGKEKGNEEKKEKREEHEKKNEKGNEIKEK.

This sequence belongs to the eukaryotic-type primase large subunit family. In terms of assembly, heterodimer of a small subunit (PriS) and a large subunit (PriL). It depends on [4Fe-4S] cluster as a cofactor.

In terms of biological role, regulatory subunit of DNA primase, an RNA polymerase that catalyzes the synthesis of short RNA molecules used as primers for DNA polymerase during DNA replication. Stabilizes and modulates the activity of the small subunit, increasing the rate of DNA synthesis, and conferring RNA synthesis capability. The DNA polymerase activity may enable DNA primase to also catalyze primer extension after primer synthesis. May also play a role in DNA repair. This is DNA primase large subunit PriL from Methanosarcina acetivorans (strain ATCC 35395 / DSM 2834 / JCM 12185 / C2A).